Reading from the N-terminus, the 282-residue chain is UPF0761 membrane protein HAPS_1376 (282 aa).

Helical transmembrane passes span 32 to 52 (LLSL…LPIF), 89 to 109 (MGII…SSID), 124 to 144 (VILS…FAGA), 170 to 190 (LLKF…YLIV), 202 to 222 (VGAL…IWYI), and 234 to 254 (ALAT…VVLL).

It belongs to the UPF0761 family.

It is found in the cell inner membrane. In Glaesserella parasuis serovar 5 (strain SH0165) (Haemophilus parasuis), this protein is UPF0761 membrane protein HAPS_1376.